We begin with the raw amino-acid sequence, 316 residues long: Ribosomal protein L11 methyltransferase (316 aa).

S-adenosyl-L-methionine contacts are provided by T157, G178, D200, and N243.

This sequence belongs to the methyltransferase superfamily. PrmA family.

Its subcellular location is the cytoplasm. The catalysed reaction is L-lysyl-[protein] + 3 S-adenosyl-L-methionine = N(6),N(6),N(6)-trimethyl-L-lysyl-[protein] + 3 S-adenosyl-L-homocysteine + 3 H(+). In terms of biological role, methylates ribosomal protein L11. The protein is Ribosomal protein L11 methyltransferase of Streptococcus pneumoniae (strain P1031).